A 198-amino-acid chain; its full sequence is Glycerol-3-phosphate acyltransferase (198 aa).

A run of 5 helical transmembrane segments spans residues 2-22, 53-75, 79-98, 113-133, and 147-167; these read FITY…FALV, AGFI…PLIF, IHPL…PIFA, LLCY…TLLF, and IAAV…AMCL.

It belongs to the PlsY family. In terms of assembly, probably interacts with PlsX.

It localises to the cell membrane. The enzyme catalyses an acyl phosphate + sn-glycerol 3-phosphate = a 1-acyl-sn-glycero-3-phosphate + phosphate. The protein operates within lipid metabolism; phospholipid metabolism. Catalyzes the transfer of an acyl group from acyl-phosphate (acyl-PO(4)) to glycerol-3-phosphate (G3P) to form lysophosphatidic acid (LPA). This enzyme utilizes acyl-phosphate as fatty acyl donor, but not acyl-CoA or acyl-ACP. The polypeptide is Glycerol-3-phosphate acyltransferase (Bacillus cytotoxicus (strain DSM 22905 / CIP 110041 / 391-98 / NVH 391-98)).